We begin with the raw amino-acid sequence, 235 residues long: CMP-N,N'-diacetyllegionaminic acid synthase (235 aa).

It belongs to the CMP-NeuNAc synthase family.

It catalyses the reaction N,N-diacetyllegionaminate + CTP = CMP-N,N-diacetyllegionaminate + diphosphate. Involved in biosynthesis of legionaminic acid (5,7-diamino-3,5,7,9-tetradeoxy-D-glycero-D-galacto-non-2-ulosonic acid)(Leg), a sialic acid-like derivative that is incorporated into flagellin via O-linkage to Ser/Thr. Catalyzes the conversion of N,N'-diacetyllegionaminic acid (Leg5Ac7Ac) and CTP into CMP-N,N'-diacetyllegionaminic acid (CMP-Leg5Ac7Ac). The sequence is that of CMP-N,N'-diacetyllegionaminic acid synthase (legF) from Campylobacter jejuni subsp. jejuni serotype O:2 (strain ATCC 700819 / NCTC 11168).